Here is a 568-residue protein sequence, read N- to C-terminus: Methyl-accepting chemotaxis protein CtpH (568 aa).

The Cytoplasmic segment spans residues 1-39 (MPASPGHRDVLGCLVAACVPVQPGNPSRRSMLQQSLRAQ). Residues 40–60 (ILVLLGGSLAALLLIALACFG) form a helical membrane-spanning segment. The Periplasmic portion of the chain corresponds to 61 to 216 (SLTGDVRAYR…ISAEARRTML (156 aa)). A helical membrane pass occupies residues 217-237 (LGSLVLIGASLAVALLSLWLV). The Cytoplasmic segment spans residues 238 to 568 (NRNLVRPVQR…LGDALQRLRA (331 aa)). An HAMP domain is found at 239–291 (RNLVRPVQRLIEHIAQLSHGDFGERIEIRRKDELGKLALAANTLRDFLVDIFD). The 237-residue stretch at 296–532 (STRDLDSASG…EISRNLTEIA (237 aa)) folds into the Methyl-accepting transducer domain.

Belongs to the methyl-accepting chemotaxis (MCP) protein family.

The protein localises to the cell inner membrane. In terms of biological role, chemotactic-signal transducers respond to changes in the concentration of attractants and repellents in the environment, transduce a signal from the outside to the inside of the cell, and facilitate sensory adaptation through the variation of the level of methylation. Chemoreceptor for inorganic phosphate, which is required for taxis at high concentrations of phosphate. Recognizes inorganic phosphate directly. Can also bind to other components that have a pyrophosphate group, including ATP and ADP. This chain is Methyl-accepting chemotaxis protein CtpH, found in Pseudomonas aeruginosa (strain ATCC 15692 / DSM 22644 / CIP 104116 / JCM 14847 / LMG 12228 / 1C / PRS 101 / PAO1).